The following is a 121-amino-acid chain: Small ribosomal subunit protein uS13 (121 aa).

The disordered stretch occupies residues 93-121 (RGLPVRGQNTKNNARTRKGPRRTVANKKK). The segment covering 106-121 (ARTRKGPRRTVANKKK) has biased composition (basic residues).

Belongs to the universal ribosomal protein uS13 family. Part of the 30S ribosomal subunit. Forms a loose heterodimer with protein S19. Forms two bridges to the 50S subunit in the 70S ribosome.

In terms of biological role, located at the top of the head of the 30S subunit, it contacts several helices of the 16S rRNA. In the 70S ribosome it contacts the 23S rRNA (bridge B1a) and protein L5 of the 50S subunit (bridge B1b), connecting the 2 subunits; these bridges are implicated in subunit movement. Contacts the tRNAs in the A and P-sites. In Bacillus pumilus (strain SAFR-032), this protein is Small ribosomal subunit protein uS13.